A 149-amino-acid polypeptide reads, in one-letter code: MTESDTKITLIGSRLAREGLEFIFKGEMPECKKCRLKNTCLNLEPGRRYRVERIRNKDIHECFLHDSGVVAVDVSKAPILTTLESRKAVDGAKIMYEPPKCGKRECEIYEICHPEGLSRGDKCKIVEVLENLDSKCEANYSLKKVKLSW.

Belongs to the UPF0179 family.

The chain is UPF0179 protein Mbar_A0292 from Methanosarcina barkeri (strain Fusaro / DSM 804).